The sequence spans 66 residues: Large ribosomal subunit protein bL35 (66 aa).

Belongs to the bacterial ribosomal protein bL35 family.

The polypeptide is Large ribosomal subunit protein bL35 (Parvibaculum lavamentivorans (strain DS-1 / DSM 13023 / NCIMB 13966)).